A 190-amino-acid polypeptide reads, in one-letter code: Putative resolvase R771 (190 aa).

Residues 11-30 (SSVLGVHQRTLYQWDKKGWI) constitute a DNA-binding region (H-T-H motif). The Resolvase/invertase-type recombinase catalytic domain occupies 61–190 (LSICYVRVSS…RNGLKKYSNK (130 aa)). Residues 66–92 (VRVSSNNQKDDLERQIKFMKKKYPNHT) adopt a coiled-coil conformation. Serine 69 acts as the O-(5'-phospho-DNA)-serine intermediate in catalysis.

Belongs to the site-specific recombinase resolvase family.

In terms of biological role, resolvase catalyzes the resolution (a site-specific recombination) of the cointegrated replicon to yield the final transposition products. The protein is Putative resolvase R771 of Acanthamoeba polyphaga (Amoeba).